The chain runs to 322 residues: CPX chromosomal region candidate gene 1 protein homolog (322 aa).

Polar residues-rich tracts occupy residues 1–23 and 37–78; these read MTSS…NETP and TNIS…TQND. A disordered region spans residues 1–83; the sequence is MTSSNQGNDP…MTQNDPPDEE (83 aa).

In Mus musculus (Mouse), this protein is CPX chromosomal region candidate gene 1 protein homolog (Cpxcr1).